The following is a 576-amino-acid chain: Cyclic nucleotide-binding domain-containing protein 2 (576 aa).

116 to 239 (SYRNYAEPLQ…DAQYRFEFFR (124 aa)) lines the a nucleoside 3',5'-cyclic phosphate pocket.

It localises to the cytoplasm. It is found in the cytosol. Essential for male fertility. Plays an important role in spermatogenesis and regulates sperm motility by controlling the development of the flagellar bending of sperm. The polypeptide is Cyclic nucleotide-binding domain-containing protein 2 (CNBD2) (Homo sapiens (Human)).